The sequence spans 91 residues: Hepcidin-1 (91 aa).

An N-terminal signal peptide occupies residues 1 to 24; that stretch reads MKLSNVFLAAVVILTCVCVFQITA. A propeptide spanning residues 25–64 is cleaved from the precursor; the sequence is VPFIQQVQDEHHVESEELQENQHLTEAEHRQTDPLVLFRT. Intrachain disulfides connect C73/C89, C76/C79, C77/C85, and C80/C88.

Belongs to the hepcidin family.

The protein resides in the secreted. In terms of biological role, seems to act as a signaling molecule involved in the maintenance of iron homeostasis. Seems to be required in conjunction with HFE to regulate both intestinal iron absorption and iron storage in macrophages. May also have antimicrobial activity. This Danio rerio (Zebrafish) protein is Hepcidin-1 (hamp1).